A 278-amino-acid polypeptide reads, in one-letter code: MTRYTKLFSALSAKNEGAFVPFIMLGAPTPEASLAIIRTVVAAGADALELGVPFSDPVADGPTIQRSHLRALDNGATVDSSLELIRQIRKEFPELPIGMLIYGNVAFTRGITQFYQEFADAGVDSILLPDVPVREGEPFIAAAKQAGIDPIFIAPAQASEATLEGVAQHSSGYIYAISRDGVTGTERQSSTRGLDKVVANVKRFGGAPILLGFGISTPEHVRDAIAAGASGAITGSALTSIIERHTTGTHPEPAQVTDLEALTEEIFAFVKDMKAATR.

Residues Glu-49 and Asp-60 each act as proton acceptor in the active site.

It belongs to the TrpA family. Tetramer of two alpha and two beta chains.

It carries out the reaction (1S,2R)-1-C-(indol-3-yl)glycerol 3-phosphate + L-serine = D-glyceraldehyde 3-phosphate + L-tryptophan + H2O. It participates in amino-acid biosynthesis; L-tryptophan biosynthesis; L-tryptophan from chorismate: step 5/5. Functionally, the alpha subunit is responsible for the aldol cleavage of indoleglycerol phosphate to indole and glyceraldehyde 3-phosphate. This Corynebacterium diphtheriae (strain ATCC 700971 / NCTC 13129 / Biotype gravis) protein is Tryptophan synthase alpha chain.